The primary structure comprises 291 residues: Syntaxin-1A homolog (291 aa).

Positions 1–24 are disordered; it reads MTKDRLSALKAAQSEDEQDDDMHM. At 1-266 the chain is on the cytoplasmic side; the sequence is MTKDRLSALK…QYQSKARRKK (266 aa). Residues 69-95 are a coiled coil; that stretch reads NDQKTKEELDELMAVIKRAANKVRGKL. Residues 193-255 form the t-SNARE coiled-coil homology domain; the sequence is LADIEARHND…DRAVADTKKA (63 aa). Residues 267–287 form a helical; Anchor for type IV membrane protein membrane-spanning segment; that stretch reads ICILVTGVILITGLIIFILFY. The Extracellular segment spans residues 288 to 291; sequence AKVL.

It belongs to the syntaxin family. In terms of assembly, interacts (via N-terminus, in open or in closed conformation) with unc-18; the interaction is direct. Interaction in open conformation with unc-18 promotes synaptic vesicle docking and tethering. Interaction via N-terminus with unc-18 mediates the secretion of the neurotransmitter acetylcholine from cholinergic motor neurons. Interaction with unc-18 is reduced in the presence of unc-13. In terms of tissue distribution, expressed throughout the head ganglion, nerve ring, ventral cord, dorsal cord, intestine, vulva and spermatheca.

Its subcellular location is the cell membrane. It is found in the cell projection. It localises to the axon. The protein resides in the dendrite. The protein localises to the perikaryon. Plays a critical role in several secretory processes, including cuticle secretion and neurotransmitter release, and probably assists in neuronal membrane maturation or the final stages of neuronal differentiation. Plays a role in synaptic vesicle docking and tethering through its association with unc-18. Through binding to unc-18 mediates the release of the neurotransmitter acetylcholine from cholinergic motor neurons, and thereby promotes locomotory behaviors. Essential for embryonic viability and development. Has a role in dauer formation and adult life span. Required for locomotion. Probably by regulating neuronal transmission downstream of lin-3 and receptor lin-23 and phospholipase plc-3 and upstream of innexin unc-7 and egl-4/PKG in ALA neurons, involved in the decrease in pharyngeal pumping during the quiescent state that precedes each larval molt. This is Syntaxin-1A homolog from Caenorhabditis elegans.